Reading from the N-terminus, the 785-residue chain is Phenylalanine--tRNA ligase beta subunit (785 aa).

The tRNA-binding domain occupies 39 to 148 (APAFSGVVIA…ADAPVGQSIR (110 aa)). Residues 399–474 (PKRQAVQLRA…RVYGYNNIPA (76 aa)) form the B5 domain. Mg(2+)-binding residues include D452, D458, E461, and E462. In terms of domain architecture, FDX-ACB spans 692 to 784 (SKFQPVRRDL…AASELGAQLR (93 aa)).

It belongs to the phenylalanyl-tRNA synthetase beta subunit family. Type 1 subfamily. In terms of assembly, tetramer of two alpha and two beta subunits. Mg(2+) serves as cofactor.

It localises to the cytoplasm. The enzyme catalyses tRNA(Phe) + L-phenylalanine + ATP = L-phenylalanyl-tRNA(Phe) + AMP + diphosphate + H(+). This Chromobacterium violaceum (strain ATCC 12472 / DSM 30191 / JCM 1249 / CCUG 213 / NBRC 12614 / NCIMB 9131 / NCTC 9757 / MK) protein is Phenylalanine--tRNA ligase beta subunit.